Here is a 102-residue protein sequence, read N- to C-terminus: Monothiol glutaredoxin-S6 (102 aa).

Positions 1–101 constitute a Glutaredoxin domain; that stretch reads MESVRSLVED…AMLRRAGAIW (101 aa). Cys21 is a binding site for [2Fe-2S] cluster.

This sequence belongs to the glutaredoxin family. CC-type subfamily.

Its subcellular location is the cytoplasm. Its function is as follows. May only reduce GSH-thiol disulfides, but not protein disulfides. This Arabidopsis thaliana (Mouse-ear cress) protein is Monothiol glutaredoxin-S6 (GRXS6).